The primary structure comprises 78 residues: Acyl carrier protein AcpP (78 aa).

One can recognise a Carrier domain in the interval 2 to 77 (SDTAERVKKI…DAVKYIDKAS (76 aa)). Serine 37 carries the post-translational modification O-(pantetheine 4'-phosphoryl)serine.

Belongs to the acyl carrier protein (ACP) family. Post-translationally, 4'-phosphopantetheine is transferred from CoA to a specific serine of apo-ACP by AcpS. This modification is essential for activity because fatty acids are bound in thioester linkage to the sulfhydryl of the prosthetic group.

It is found in the cytoplasm. Its pathway is lipid metabolism; fatty acid biosynthesis. Functionally, carrier of the growing fatty acid chain in fatty acid biosynthesis. The chain is Acyl carrier protein AcpP from Mesorhizobium japonicum (strain LMG 29417 / CECT 9101 / MAFF 303099) (Mesorhizobium loti (strain MAFF 303099)).